Here is a 286-residue protein sequence, read N- to C-terminus: Undecaprenyl-diphosphatase (286 aa).

Transmembrane regions (helical) follow at residues 17–37 (VVLGIVQGLTEFLPISSTAHL), 49–69 (PGVAVTAVIQLGSIAAVIGYF), 98–118 (IAIAVGTLPVVVAGLLIKLFW), 126–146 (LRSVASIGIVSIVMALLLALA), 159–179 (VQGLDGVVVGLAQALAIIPGV), 204–224 (FLLGIPAITLAGLVELKGAFA), 232–252 (LPMLLGILSAAVVSWLAIAWL), and 261–281 (TWPFVIYRLVFGVVLLALVLA).

Belongs to the UppP family.

The protein localises to the cell inner membrane. It carries out the reaction di-trans,octa-cis-undecaprenyl diphosphate + H2O = di-trans,octa-cis-undecaprenyl phosphate + phosphate + H(+). Catalyzes the dephosphorylation of undecaprenyl diphosphate (UPP). Confers resistance to bacitracin. This is Undecaprenyl-diphosphatase from Synechococcus sp. (strain RCC307).